The sequence spans 396 residues: S-adenosylmethionine synthase (396 aa).

E12 provides a ligand contact to Mg(2+). H18 serves as a coordination point for ATP. E46 lines the K(+) pocket. The L-methionine site is built by E59 and Q102. ATP is bound by residues 170-172, 238-241, D249, 255-256, A272, K276, and K280; these read DGK, SGRF, and RK. D249 contributes to the L-methionine binding site. An L-methionine-binding site is contributed by K280.

The protein belongs to the AdoMet synthase family. In terms of assembly, homotetramer. Mn(2+) is required as a cofactor. Requires Mg(2+) as cofactor. Co(2+) serves as cofactor. The cofactor is K(+).

Its subcellular location is the cytoplasm. It catalyses the reaction L-methionine + ATP + H2O = S-adenosyl-L-methionine + phosphate + diphosphate. It participates in amino-acid biosynthesis; S-adenosyl-L-methionine biosynthesis; S-adenosyl-L-methionine from L-methionine: step 1/1. Catalyzes the formation of S-adenosylmethionine from methionine and ATP. The reaction comprises two steps that are both catalyzed by the same enzyme: formation of S-adenosylmethionine (AdoMet) and triphosphate, and subsequent hydrolysis of the triphosphate. The chain is S-adenosylmethionine synthase (SAMS) from Triticum aestivum (Wheat).